A 208-amino-acid chain; its full sequence is Small ribosomal subunit protein uS4A (208 aa).

One can recognise an S4 RNA-binding domain in the interval 98–164; the sequence is TRLDNVVYTL…AKIQSAIQAV (67 aa).

It belongs to the universal ribosomal protein uS4 family. In terms of assembly, part of the 30S ribosomal subunit. Contacts protein S5. The interaction surface between S4 and S5 is involved in control of translational fidelity.

Functionally, one of the primary rRNA binding proteins, it binds directly to 16S rRNA where it nucleates assembly of the body of the 30S subunit. With S5 and S12 plays an important role in translational accuracy. In Bdellovibrio bacteriovorus (strain ATCC 15356 / DSM 50701 / NCIMB 9529 / HD100), this protein is Small ribosomal subunit protein uS4A.